A 312-amino-acid chain; its full sequence is Urease accessory protein UreD (312 aa).

The disordered stretch occupies residues 1–50 (MRPLAPDARCAPSRPGRGPWYARRPVTTPSDPPAALREPPPPARRAGKAG).

The protein belongs to the UreD family. As to quaternary structure, ureD, UreF and UreG form a complex that acts as a GTP-hydrolysis-dependent molecular chaperone, activating the urease apoprotein by helping to assemble the nickel containing metallocenter of UreC. The UreE protein probably delivers the nickel.

It localises to the cytoplasm. Its function is as follows. Required for maturation of urease via the functional incorporation of the urease nickel metallocenter. The polypeptide is Urease accessory protein UreD (Sorangium cellulosum (strain So ce56) (Polyangium cellulosum (strain So ce56))).